We begin with the raw amino-acid sequence, 304 residues long: Cell surface-binding protein OPG105 (304 aa).

In terms of domain architecture, Alpha-carbonic anhydrase spans 1-235 (MSQQLSPINI…NDDTEVYYSG (235 aa)). At 1 to 275 (MSQQLSPINI…YQKYIEGNKT (275 aa)) the chain is on the virion surface side. A helical transmembrane segment spans residues 276–294 (FAIIAIVFVYILTAILFLM). Topologically, residues 295-304 (SRRYSREKQN) are intravirion.

Belongs to the alpha-carbonic anhydrase family. As to quaternary structure, homodimer; disulfide-linked. In terms of processing, apparently non-glycosylated.

It is found in the virion membrane. Binds to chondroitin sulfate on the cell surface to provide virion attachment to target cell. The sequence is that of Cell surface-binding protein OPG105 (OPG105) from Homo sapiens (Human).